The primary structure comprises 261 residues: Immediate-early protein IE-0 (261 aa).

The segment at 212–257 (CNVCKEISTDERFLKPKECCEYAICNACCVNMWKTATTHAKCPACR) adopts an RING-type zinc-finger fold.

Interacts with proteins C42 and FP25. Interacts with host beta-tubulin. Interacts with Ac66 and vUb.

Its subcellular location is the host nucleus. It is found in the host cytoplasm. The protein resides in the virion. Functionally, putative viral E3 ligase that plays an essential regulatory role in both viral DNA replication and transcriptional transactivation. The role in transcription has been shown to include activation of gene expression from early viral promoters. Also promotes the efficient egress of nucleocapsids from the host nucleus. May act as an E3 ligase that promotes ubiquitination of nucleocapsids proteins by vUbi and subsequent viral egress for the host nucleus. The polypeptide is Immediate-early protein IE-0 (IE0) (Lepidoptera (butterflies and moths)).